The following is a 97-amino-acid chain: NADH-ubiquinone oxidoreductase chain 4L (97 aa).

3 helical membrane passes run 1-21 (MALL…ILLN), 23-43 (LHFL…FIGI), and 60-80 (LLLL…MVAL).

This sequence belongs to the complex I subunit 4L family.

It is found in the mitochondrion membrane. It carries out the reaction a ubiquinone + NADH + 5 H(+)(in) = a ubiquinol + NAD(+) + 4 H(+)(out). Core subunit of the mitochondrial membrane respiratory chain NADH dehydrogenase (Complex I) that is believed to belong to the minimal assembly required for catalysis. Complex I functions in the transfer of electrons from NADH to the respiratory chain. The immediate electron acceptor for the enzyme is believed to be ubiquinone. This is NADH-ubiquinone oxidoreductase chain 4L (ND4L) from Paracentrotus lividus (Common sea urchin).